Here is a 444-residue protein sequence, read N- to C-terminus: Serine--tRNA ligase (444 aa).

Residue 243–245 (TAE) coordinates L-serine. Residue 274 to 276 (RSE) participates in ATP binding. Glu-297 is a binding site for L-serine. ATP is bound at residue 361–364 (EISS). Ser-397 is a binding site for L-serine.

The protein belongs to the class-II aminoacyl-tRNA synthetase family. Type-1 seryl-tRNA synthetase subfamily. In terms of assembly, homodimer. The tRNA molecule binds across the dimer.

It is found in the cytoplasm. It catalyses the reaction tRNA(Ser) + L-serine + ATP = L-seryl-tRNA(Ser) + AMP + diphosphate + H(+). It carries out the reaction tRNA(Sec) + L-serine + ATP = L-seryl-tRNA(Sec) + AMP + diphosphate + H(+). The protein operates within aminoacyl-tRNA biosynthesis; selenocysteinyl-tRNA(Sec) biosynthesis; L-seryl-tRNA(Sec) from L-serine and tRNA(Sec): step 1/1. In terms of biological role, catalyzes the attachment of serine to tRNA(Ser). Is also able to aminoacylate tRNA(Sec) with serine, to form the misacylated tRNA L-seryl-tRNA(Sec), which will be further converted into selenocysteinyl-tRNA(Sec). In Acidobacterium capsulatum (strain ATCC 51196 / DSM 11244 / BCRC 80197 / JCM 7670 / NBRC 15755 / NCIMB 13165 / 161), this protein is Serine--tRNA ligase.